We begin with the raw amino-acid sequence, 309 residues long: HPr kinase/phosphorylase (309 aa).

Active-site residues include His138 and Lys159. 153-160 contacts ATP; that stretch reads GDSGIGKS. Residue Ser160 coordinates Mg(2+). Asp177 serves as the catalytic Proton acceptor; for phosphorylation activity. Proton donor; for dephosphorylation activity. The tract at residues 201–210 is important for the catalytic mechanism of both phosphorylation and dephosphorylation; it reads LEIRGVGIID. Glu202 serves as a coordination point for Mg(2+). The active site involves Arg243. Residues 264–269 are important for the catalytic mechanism of dephosphorylation; the sequence is PVKTGR.

Belongs to the HPrK/P family. Homohexamer. Mg(2+) is required as a cofactor.

It carries out the reaction [HPr protein]-L-serine + ATP = [HPr protein]-O-phospho-L-serine + ADP + H(+). The catalysed reaction is [HPr protein]-O-phospho-L-serine + phosphate + H(+) = [HPr protein]-L-serine + diphosphate. Its function is as follows. Catalyzes the ATP- as well as the pyrophosphate-dependent phosphorylation of a specific serine residue in HPr, a phosphocarrier protein of the phosphoenolpyruvate-dependent sugar phosphotransferase system (PTS). HprK/P also catalyzes the pyrophosphate-producing, inorganic phosphate-dependent dephosphorylation (phosphorolysis) of seryl-phosphorylated HPr (P-Ser-HPr). The two antagonistic activities of HprK/P are regulated by several intracellular metabolites, which change their concentration in response to the absence or presence of rapidly metabolisable carbon sources (glucose, fructose, etc.) in the growth medium. Therefore, by controlling the phosphorylation state of HPr, HPrK/P is a sensor enzyme that plays a major role in the regulation of carbon metabolism and sugar transport: it mediates carbon catabolite repression (CCR), and regulates PTS-catalyzed carbohydrate uptake and inducer exclusion. The polypeptide is HPr kinase/phosphorylase (Streptococcus thermophilus (strain ATCC BAA-491 / LMD-9)).